A 212-amino-acid chain; its full sequence is Thymidylate kinase (212 aa).

Residue 10–17 (GIDGCGKT) participates in ATP binding.

Belongs to the thymidylate kinase family.

It catalyses the reaction dTMP + ATP = dTDP + ADP. In terms of biological role, phosphorylation of dTMP to form dTDP in both de novo and salvage pathways of dTTP synthesis. This Prochlorococcus marinus (strain MIT 9312) protein is Thymidylate kinase.